A 436-amino-acid chain; its full sequence is RNA-binding motif, single-stranded-interacting protein 3 (436 aa).

Residues 28 to 56 (APAPHPMAPPSPSTNSSSNNSSNNSSGEQ) are disordered. Over residues 30–39 (APHPMAPPSP) the composition is skewed to pro residues. Residues 40–53 (STNSSSNNSSNNSS) show a composition bias toward low complexity. 2 consecutive RRM domains span residues 60 to 133 (TNLY…MAKQ) and 139 to 224 (TNLY…FADG). Over residues 398-421 (TSPQTVAPSSQDTSGQQQQIAVDT) the composition is skewed to polar residues. The disordered stretch occupies residues 398–436 (TSPQTVAPSSQDTSGQQQQIAVDTSNEHAPAYSYQQSKP).

It localises to the cytoplasm. Functionally, binds poly(A) and poly(U) oligoribonucleotides. This is RNA-binding motif, single-stranded-interacting protein 3 (RBMS3) from Pongo abelii (Sumatran orangutan).